We begin with the raw amino-acid sequence, 110 residues long: Small ribosomal subunit protein bS16 (110 aa).

A compositionally biased stretch (basic and acidic residues) spans 81–104 (VRPAEVLGKQKQEKERSAKKKDAT). Positions 81-110 (VRPAEVLGKQKQEKERSAKKKDATASETSE) are disordered.

The protein belongs to the bacterial ribosomal protein bS16 family.

The protein is Small ribosomal subunit protein bS16 of Prochlorococcus marinus (strain NATL1A).